Reading from the N-terminus, the 1940-residue chain is MSSDTEMEVFGIAAPFLRKSEKERIEAQNQPFDAKTYCFVVDSKEEYAKGKIKSSQDGKVTVETEDNRTLVVKPEDVYAMNPPKFDKIEDMAMLTHLNEPAVLYNLKDRYTSWMIYTYSGLFCVTVNPYKWLPVYTPEVVDGYRGKKRQEAPPHIFSISDNAYQFMLTDRENQSILITGESGAGKTVNTKRVIQYFATIAATGDLAKKKDSKMKGTLEDQIISANPLLEAFGNAKTVRNDNSSRFGKFIRIHFGTTGKLASADIETYLLEKSRVTFQLKAERSYHIFYQILSNKKPELIELLLITTNPYDYPFISQGEILVASIDDREELLATDSAIDILGFTPEEKSGLYKLTGAVMHYGNMKFKQKQREEQAEPDGTEVADKTAYLMGLNSSDLLKALCFPRVKVGNEYVTKGQTVDQVHHAVNALSKSVYEKLFLWMVTRINQQLDTKLPRQHFIGVLDIAGFEIFEYNSLEQLCINFTNEKLQQFFNHHMFVLEQEEYKKEGIEWTFIDFGMDLAACIELIEKPMGIFSILEEECMFPKATDTSFKNKLYDQHLGKSNNFQKPKVVKGKAEAHFSLIHYAGTVDYSVSGWLEKNKDPLNETVVGLYQKSSNRLLAHLYATFATTDADGGKKKVAKKKGSSFQTVSALFRENLNKLMSNLRTTHPHFVRCIIPNETKTPGAMEHSLVLHQLRCNGVLEGIRICRKGFPNRILYGDFKQRYRVLNASAIPEGQFIDSKKACEKLLASIDIDHTQYKFGHTKVFFKAGLLGTLEEMRDERLAKLITRTQAVCRGFLMRVEFQKMMQRRESIFCIQYNIRAFMNVKHWPWMKLFFKIKPLLKSAETEKEMATMKEEFQKTKDELAKSEAKRKELEEKLVTLVQEKNDLQLQVQAESENLLDAEERCDQLIKAKFQLEAKIKEVTERAEDEEEINAELTAKKRKLEDECSELKKDIDDLELTLAKVEKEKHATENKVKNLTEELAGLDETIAKLTREKKALQEAHQQTLDDLQAEEDKVNSLSKLKSKLEQQVDDLESSLEQEKKLRVDLERNKRKLEGDLKLAQESILDLENDKQQLDERLKKKDFEYSQLQSKVEDEQTLSLQLQKKIKELQARIEELEEEIEAERATRAKTEKQRSDYARELEELSERLEEAGGVTSTQIELNKKREAEFLKLRRDLEEATLQHEATVATLRKKHADSAAELAEQIDNLQRVKQKLEKEKSEFKLEIDDLSSSVESVSKSKANLEKICRTLEDQLSEARGKNEETQRSLSELTTQKSRLQTEAGELSRQLEEKESIVSQLSRSKQAFTQQIEELKRQLEEENKAKNALAHALQSSRHDCDLLREQYEEEQEGKAELQRALSKANSEVAQWRTKYETDAIQRTEELEEAKKKLAQRLQDSEEQVEAVNAKCASLEKTKQRLQGEVEDLMVDVERANSLAAALDKKQRNFDKVLAEWKTKCEESQAELEAALKESRSLSTELFKLKNAYEEALDQLETVKRENKNLEQEIADLTEQIAENGKSIHELEKSRKQMELEKADIQMALEEAEAALEHEEAKILRIQLELTQVKSEIDRKIAEKDEEIEQLKRNYQRTVETMQGALDAEVRSRNEAIRLKKKMEGDLNEIEIQLSHANRQAAETIKHLRSVQGQLKDTQLHLDDALRGQEDLKEQLAIVERRANLLQAEVEELRATLEQTERARKLAEQELLDSNERVQLLHTQNTSLIHTKKKLETDLTQLQSEVEDASRDARNAEEKAKKAITDAAMMAEELKKEQDTSAHLERMKKNLEQTVKDLQHRLDEAEQLALKGGKKQIQKLETRIRELEFELEGEQKRNTESVKGLRKYERRVKELTYQSEEDRKNVLRLQDLVDKLQVKVKSYKRQAEEADEQANVHLTKFRKAQHELEEAEERADIAESQVNKLRAKTRDFTSSRMVVHESEE.

A Myosin N-terminal SH3-like domain is found at 33–82 (DAKTYCFVVDSKEEYAKGKIKSSQDGKVTVETEDNRTLVVKPEDVYAMNP). In terms of domain architecture, Myosin motor spans 86-779 (DKIEDMAMLT…LLGTLEEMRD (694 aa)). Position 130 is an N6,N6,N6-trimethyllysine (Lys-130). ATP is bound at residue 179 to 186 (GESGAGKT). 2 actin-binding regions span residues 656-678 (LNKLMSNLRTTHPHFVRCIIPNE) and 758-772 (KFGHTKVFFKAGLLG). The 30-residue stretch at 782 to 811 (LAKLITRTQAVCRGFLMRVEFQKMMQRRES) folds into the IQ domain. A coiled-coil region spans residues 840–1933 (LLKSAETEKE…KTRDFTSSRM (1094 aa)). The interval 1260–1289 (ARGKNEETQRSLSELTTQKSRLQTEAGELS) is disordered. Residues 1269–1282 (RSLSELTTQKSRLQ) show a composition bias toward polar residues.

Belongs to the TRAFAC class myosin-kinesin ATPase superfamily. Myosin family. Muscle myosin is a hexameric protein that consists of 2 heavy chain subunits (MHC), 2 alkali light chain subunits (MLC) and 2 regulatory light chain subunits (MLC-2).

The protein localises to the cytoplasm. It is found in the myofibril. Its function is as follows. Muscle contraction. This chain is Myosin-3 (Myh3), found in Rattus norvegicus (Rat).